A 181-amino-acid polypeptide reads, in one-letter code: ATP synthase subunit b (181 aa).

The helical transmembrane segment at 24 to 44 (LFPNLPNFIAHLLATIVLVIV) threads the bilayer.

Belongs to the ATPase B chain family. In terms of assembly, F-type ATPases have 2 components, F(1) - the catalytic core - and F(0) - the membrane proton channel. F(1) has five subunits: alpha(3), beta(3), gamma(1), delta(1), epsilon(1). F(0) has three main subunits: a(1), b(2) and c(10-14). The alpha and beta chains form an alternating ring which encloses part of the gamma chain. F(1) is attached to F(0) by a central stalk formed by the gamma and epsilon chains, while a peripheral stalk is formed by the delta and b chains.

Its subcellular location is the cell membrane. F(1)F(0) ATP synthase produces ATP from ADP in the presence of a proton or sodium gradient. F-type ATPases consist of two structural domains, F(1) containing the extramembraneous catalytic core and F(0) containing the membrane proton channel, linked together by a central stalk and a peripheral stalk. During catalysis, ATP synthesis in the catalytic domain of F(1) is coupled via a rotary mechanism of the central stalk subunits to proton translocation. In terms of biological role, component of the F(0) channel, it forms part of the peripheral stalk, linking F(1) to F(0). The polypeptide is ATP synthase subunit b (Mycoplasma capricolum subsp. capricolum (strain California kid / ATCC 27343 / NCTC 10154)).